The primary structure comprises 1418 residues: Chromatin remodeling factor mit1 (1418 aa).

Low complexity predominate over residues 135-148 (DETASDSATSSSSD). The segment at 135 to 156 (DETASDSATSSSSDTNKKVNRK) is disordered. Residues 212–271 (VCVCVKCHGREHRSSGKNFVYCDHCSNVYHYDCSPLPSLNKETRNYSQQNGFICPLCSKN) form a PHD-type zinc finger. The RING-type; atypical zinc-finger motif lies at 215 to 269 (CVKCHGREHRSSGKNFVYCDHCSNVYHYDCSPLPSLNKETRNYSQQNGFICPLCS). One can recognise a Helicase ATP-binding domain in the interval 568–738 (YLRWYTHHPC…FNLLQFLNPM (171 aa)). 581-588 (DEMGLGKT) provides a ligand contact to ATP. Positions 875 to 1034 (ILRLLVPKLI…QNHNSEKDLE (160 aa)) constitute a Helicase C-terminal domain.

The protein belongs to the SNF2/RAD54 helicase family. Interacts with clr3.

It is found in the nucleus. Its subcellular location is the chromosome. It localises to the centromere. The protein localises to the telomere. Its function is as follows. Required for proper positioning of nucleosomes at heterochromatic loci and for transcriptional gene silencing (TGS) function of the Snf2/Hdac-containing repressor complex (SHREC). The protein is Chromatin remodeling factor mit1 (mit1) of Schizosaccharomyces pombe (strain 972 / ATCC 24843) (Fission yeast).